A 780-amino-acid polypeptide reads, in one-letter code: Subtilisin-like protease SBT1.3 (780 aa).

The signal sequence occupies residues 1–25 (MANKNPLQKPFLFIILSINLIFLQA). A propeptide spans 26 to 120 (ETTTQISTKK…VIPETRYELH (95 aa)) (activation peptide). The Inhibitor I9 domain occupies 36–120 (TYVIHMDKSA…VIPETRYELH (85 aa)). The Peptidase S8 domain occupies 116–628 (RYELHTTRSP…AGHIDPLRAT (513 aa)). Asp-154 (charge relay system) is an active-site residue. N-linked (GlcNAc...) asparagine glycosylation is present at Asn-165. The active-site Charge relay system is the His-227. Residues 384 to 477 (KQYPLVYLGR…GEKEGKLIKQ (94 aa)) form the PA domain. Asn-394 carries an N-linked (GlcNAc...) asparagine glycan. Ser-560 functions as the Charge relay system in the catalytic mechanism. N-linked (GlcNAc...) asparagine glycosylation is found at Asn-663 and Asn-731.

The protein belongs to the peptidase S8 family.

Its subcellular location is the secreted. The sequence is that of Subtilisin-like protease SBT1.3 from Arabidopsis thaliana (Mouse-ear cress).